The primary structure comprises 500 residues: Probable malate:quinone oxidoreductase (500 aa).

This sequence belongs to the MQO family. It depends on FAD as a cofactor.

The catalysed reaction is (S)-malate + a quinone = a quinol + oxaloacetate. Its pathway is carbohydrate metabolism; tricarboxylic acid cycle; oxaloacetate from (S)-malate (quinone route): step 1/1. This chain is Probable malate:quinone oxidoreductase, found in Prochlorococcus marinus (strain MIT 9211).